A 178-amino-acid chain; its full sequence is Cytidylate kinase (178 aa).

7 to 15 (GLPGTGTTT) is a binding site for ATP.

It belongs to the cytidylate kinase family. Type 2 subfamily.

Its subcellular location is the cytoplasm. It carries out the reaction CMP + ATP = CDP + ADP. The enzyme catalyses dCMP + ATP = dCDP + ADP. This Methanococcus aeolicus (strain ATCC BAA-1280 / DSM 17508 / OCM 812 / Nankai-3) protein is Cytidylate kinase.